The following is a 156-amino-acid chain: Transcription antitermination protein NusB (156 aa).

It belongs to the NusB family.

Its function is as follows. Involved in transcription antitermination. Required for transcription of ribosomal RNA (rRNA) genes. Binds specifically to the boxA antiterminator sequence of the ribosomal RNA (rrn) operons. This chain is Transcription antitermination protein NusB, found in Bartonella quintana (strain Toulouse) (Rochalimaea quintana).